The chain runs to 170 residues: Peptidyl-prolyl cis-trans isomerase-like 3 (170 aa).

The PPIase cyclophilin-type domain occupies 1 to 160 (MSVTLHTDLG…QEFRIKSVTI (160 aa)).

This sequence belongs to the cyclophilin-type PPIase family. PPIL3 subfamily.

It carries out the reaction [protein]-peptidylproline (omega=180) = [protein]-peptidylproline (omega=0). Functionally, PPIases accelerate the folding of proteins. It catalyzes the cis-trans isomerization of proline imidic peptide bonds in oligopeptides. The chain is Peptidyl-prolyl cis-trans isomerase-like 3 (cyp4) from Rhizopus delemar (strain RA 99-880 / ATCC MYA-4621 / FGSC 9543 / NRRL 43880) (Mucormycosis agent).